Here is a 458-residue protein sequence, read N- to C-terminus: MSAGKIVQIIGAVIDVEFPQNAVPKVYDALKVEEGGLTLEVQQQLGGGVVRCIALGTSDGLKRGLAVKNTGNPISVPVGTKTLGRIMNVLGEPIDQKGEIGAEETWAIHREAPSYEDQSNSTELLETGIKVIDLICPFAKGGKVGLFGGAGVGKTVNMMELIRNIAIEHSGFSVFAGVGERTREGNDFYHEMTESNVLDKVSLVYGQMNEPPGNRLRVALTGLTMAEKFRDEGRDVLFFVDNIYRYTLAGTEVSALLGRMPSAVGYQPTLAEEMGVLQERITSTKTGSITSVQAVYVPADDLTDPSPATTFAHLDSTVVLSRNIASLGIYPAVDPLDSTSRQLDPQVVGQEHYDVARGVQGILQRYKELKDIIAILSMDELSEDDKLVVARARKIERFLSQPFFVAEVFTGSPGKYVSLKDTIRGFKGILEGEYDHIPEQAFYMVGSIEEVVEKAKNM.

148 to 155 (GGAGVGKT) contacts ATP.

Belongs to the ATPase alpha/beta chains family. F-type ATPases have 2 components, CF(1) - the catalytic core - and CF(0) - the membrane proton channel. CF(1) has five subunits: alpha(3), beta(3), gamma(1), delta(1), epsilon(1). CF(0) has three main subunits: a(1), b(2) and c(9-12). The alpha and beta chains form an alternating ring which encloses part of the gamma chain. CF(1) is attached to CF(0) by a central stalk formed by the gamma and epsilon chains, while a peripheral stalk is formed by the delta and b chains.

It localises to the cell inner membrane. The enzyme catalyses ATP + H2O + 4 H(+)(in) = ADP + phosphate + 5 H(+)(out). Produces ATP from ADP in the presence of a proton gradient across the membrane. The catalytic sites are hosted primarily by the beta subunits. The chain is ATP synthase subunit beta from Actinobacillus succinogenes (strain ATCC 55618 / DSM 22257 / CCUG 43843 / 130Z).